A 453-amino-acid polypeptide reads, in one-letter code: tRNA modification GTPase MnmE (453 aa).

(6S)-5-formyl-5,6,7,8-tetrahydrofolate contacts are provided by arginine 22, glutamate 79, and lysine 119. The 162-residue stretch at 215-376 folds into the TrmE-type G domain; sequence GMKVVIAGRP…LRQHLKECMG (162 aa). Asparagine 225 serves as a coordination point for K(+). GTP is bound by residues 225–230, 244–250, 269–272, and 334–337; these read NAGKSS, TDIAGTT, DTAG, and NKAD. Serine 229 contacts Mg(2+). Positions 244, 246, and 249 each coordinate K(+). Residue threonine 250 coordinates Mg(2+). Residue lysine 453 coordinates (6S)-5-formyl-5,6,7,8-tetrahydrofolate.

It belongs to the TRAFAC class TrmE-Era-EngA-EngB-Septin-like GTPase superfamily. TrmE GTPase family. Homodimer. Heterotetramer of two MnmE and two MnmG subunits. The cofactor is K(+).

The protein resides in the cytoplasm. Its function is as follows. Exhibits a very high intrinsic GTPase hydrolysis rate. Involved in the addition of a carboxymethylaminomethyl (cmnm) group at the wobble position (U34) of certain tRNAs, forming tRNA-cmnm(5)s(2)U34. The protein is tRNA modification GTPase MnmE of Vibrio cholerae serotype O1 (strain ATCC 39315 / El Tor Inaba N16961).